A 529-amino-acid polypeptide reads, in one-letter code: Peptide chain release factor 3 (529 aa).

The tr-type G domain maps to 11–280 (AKRRTFAIIS…GLVEWAPAPM (270 aa)). Residues 20 to 27 (SHPDAGKT), 88 to 92 (DTPGH), and 142 to 145 (NKLD) contribute to the GTP site.

This sequence belongs to the TRAFAC class translation factor GTPase superfamily. Classic translation factor GTPase family. PrfC subfamily.

Its subcellular location is the cytoplasm. Functionally, increases the formation of ribosomal termination complexes and stimulates activities of RF-1 and RF-2. It binds guanine nucleotides and has strong preference for UGA stop codons. It may interact directly with the ribosome. The stimulation of RF-1 and RF-2 is significantly reduced by GTP and GDP, but not by GMP. The chain is Peptide chain release factor 3 from Klebsiella pneumoniae subsp. pneumoniae (strain ATCC 700721 / MGH 78578).